A 626-amino-acid chain; its full sequence is DNA mismatch repair protein MutL (626 aa).

2 disordered regions span residues 385-413 (SGASVPPPSIDPVESSFGSGSGEPYPSMV) and 418-437 (LTPSADQPSAADEQNPVAPD).

It belongs to the DNA mismatch repair MutL/HexB family.

This protein is involved in the repair of mismatches in DNA. It is required for dam-dependent methyl-directed DNA mismatch repair. May act as a 'molecular matchmaker', a protein that promotes the formation of a stable complex between two or more DNA-binding proteins in an ATP-dependent manner without itself being part of a final effector complex. The protein is DNA mismatch repair protein MutL of Chlorobaculum parvum (strain DSM 263 / NCIMB 8327) (Chlorobium vibrioforme subsp. thiosulfatophilum).